The following is a 152-amino-acid chain: UPF0266 membrane protein KPK_1957 (152 aa).

3 helical membrane passes run 6 to 26, 45 to 65, and 67 to 87; these read LVIILFILALLAYAVYDQFIM, VDGLIFVGLTAILIYNNITQH, and TPITTWLLSALALMGLYLFWI.

The protein belongs to the UPF0266 family.

It is found in the cell inner membrane. In Klebsiella pneumoniae (strain 342), this protein is UPF0266 membrane protein KPK_1957.